The primary structure comprises 80 residues: Small ribosomal subunit protein bS16 (80 aa).

This sequence belongs to the bacterial ribosomal protein bS16 family.

The chain is Small ribosomal subunit protein bS16 from Acholeplasma laidlawii (strain PG-8A).